An 820-amino-acid chain; its full sequence is Leucine--tRNA ligase (820 aa).

Positions 42–52 (PYPSGDLHMGH) match the 'HIGH' region motif. The short motif at 576 to 580 (KMSKS) is the 'KMSKS' region element. Lysine 579 lines the ATP pocket.

It belongs to the class-I aminoacyl-tRNA synthetase family.

It localises to the cytoplasm. The catalysed reaction is tRNA(Leu) + L-leucine + ATP = L-leucyl-tRNA(Leu) + AMP + diphosphate. The chain is Leucine--tRNA ligase from Coxiella burnetii (strain CbuK_Q154) (Coxiella burnetii (strain Q154)).